We begin with the raw amino-acid sequence, 367 residues long: Glutamate 5-kinase (367 aa).

Residue Lys-10 participates in ATP binding. Positions 50, 137, and 149 each coordinate substrate. ATP-binding positions include 169–170 (TD) and 211–217 (TGGMGTK). The 79-residue stretch at 275 to 353 (AGEITVDEGA…QQIDAILGYE (79 aa)) folds into the PUA domain.

The protein belongs to the glutamate 5-kinase family.

It localises to the cytoplasm. The enzyme catalyses L-glutamate + ATP = L-glutamyl 5-phosphate + ADP. Its pathway is amino-acid biosynthesis; L-proline biosynthesis; L-glutamate 5-semialdehyde from L-glutamate: step 1/2. Catalyzes the transfer of a phosphate group to glutamate to form L-glutamate 5-phosphate. This Citrobacter koseri (strain ATCC BAA-895 / CDC 4225-83 / SGSC4696) protein is Glutamate 5-kinase.